Reading from the N-terminus, the 134-residue chain is Fluoride-specific ion channel FluC (134 aa).

Helical transmembrane passes span 7–27, 38–58, 69–89, and 110–130; these read LAVAIGGSLGAMSRYLVTIMA, GTLLVNTLGSFLAGFFLIVLV, LFLFTGFLGAFTTFSSFAAES, and VGSLSMVFIGTLVAKYVLLGH. Residues G77 and T80 each coordinate Na(+).

This sequence belongs to the fluoride channel Fluc/FEX (TC 1.A.43) family.

The protein resides in the cell inner membrane. The enzyme catalyses fluoride(in) = fluoride(out). With respect to regulation, na(+) is not transported, but it plays an essential structural role and its presence is essential for fluoride channel function. Functionally, fluoride-specific ion channel. Important for reducing fluoride concentration in the cell, thus reducing its toxicity. This Legionella pneumophila subsp. pneumophila (strain Philadelphia 1 / ATCC 33152 / DSM 7513) protein is Fluoride-specific ion channel FluC.